The primary structure comprises 288 residues: MAGREKVTVRDIVRAKQRGERIVMVTAYDYITAKLVDEAGVDMILVGDSLGMVVLGLPSTHQVTLEDMERHTAAVARAQPRALIVADMPFMSYEASTRDAVLNAGRLIAAGADAVKIEGGASYSDTIRALVRAGIPVVAHVGLTPQRYKLLGGYRLAGKTASEAMEVIREAIGAEEAGAFAVVIEFTAWEVAREITRKLSIPTICIGSGPYCDGQVLVIHDLLGLTPTPPPFAKKYVDLAAIIRRAVSEYASDVRNGRFPGEGMYWGMKRGEYEKLQRLINEQAGSGD.

2 residues coordinate Mg(2+): Asp48 and Asp87. Residues 48 to 49, Asp87, and Lys116 each bind 3-methyl-2-oxobutanoate; that span reads DS. Glu118 provides a ligand contact to Mg(2+). Glu185 (proton acceptor) is an active-site residue.

Belongs to the PanB family. As to quaternary structure, homodecamer; pentamer of dimers. Requires Mg(2+) as cofactor.

It localises to the cytoplasm. The catalysed reaction is 3-methyl-2-oxobutanoate + (6R)-5,10-methylene-5,6,7,8-tetrahydrofolate + H2O = 2-dehydropantoate + (6S)-5,6,7,8-tetrahydrofolate. The protein operates within cofactor biosynthesis; coenzyme A biosynthesis. In terms of biological role, catalyzes the reversible reaction in which hydroxymethyl group from 5,10-methylenetetrahydrofolate is transferred onto alpha-ketoisovalerate to form ketopantoate. This Hyperthermus butylicus (strain DSM 5456 / JCM 9403 / PLM1-5) protein is 3-methyl-2-oxobutanoate hydroxymethyltransferase.